The following is a 463-amino-acid chain: Elongation factor 1-alpha 2 (463 aa).

G2 is modified (n,N,N-trimethylglycine). In terms of domain architecture, tr-type G spans 5 to 242 (KTHINIVVIG…DTILPPTRPT (238 aa)). The tract at residues 14 to 21 (GHVDSGKS) is G1. GTP-binding residues include D17, S18, G19, K20, S21, and T22. D17 provides a ligand contact to Mg(2+). K36 bears the N6,N6,N6-trimethyllysine; alternate mark. Residue K36 is modified to N6,N6-dimethyllysine; alternate. At K36 the chain carries N6-methyllysine; alternate. An N6,N6,N6-trimethyllysine modification is found at K55. The residue at position 55 (K55) is an N6,N6-dimethyllysine. The interval 70–74 (GITID) is G2. An N6,N6,N6-trimethyllysine modification is found at K79. Residues 91–94 (DAPG) form a G3 region. GTP is bound by residues N153, K154, and D156. Positions 153 to 156 (NKMD) are G4. Position 163 is a phosphoserine (S163). An N6,N6-dimethyllysine; alternate modification is found at K165. N6-methyllysine; alternate is present on K165. An N6,N6,N6-trimethyllysine; alternate; by EEF1AKMT3 modification is found at K165. Position 179 is an N6-acetyllysine (K179). GTP-binding residues include S194, G195, and W196. The tract at residues 194 to 196 (SGW) is G5. Residue S224 is modified to Phosphoserine. T239 is modified (phosphothreonine). 5-glutamyl glycerylphosphorylethanolamine occurs at positions 301 and 374. An N6-acetyllysine modification is found at K439. Residues 444–463 (KSGGAGKVTKSAQKAQKAGK) form a disordered region.

This sequence belongs to the TRAFAC class translation factor GTPase superfamily. Classic translation factor GTPase family. EF-Tu/EF-1A subfamily. In terms of assembly, homodimer; arranged in a 'head to tail' dimer configuration. Post-translationally, trimethylated at Lys-165 by EEF1AKMT3. Mono-, di-, and trimethylated at Lys-36 by EEF1AKMT4; trimethylated form is predominant. Methylation by EEF1AKMT4 contributes to the fine-tuning of translation rates for a subset of tRNAs. Trimethylated at the N-terminus and dimethylated at Lys-55 by METTL13.

It localises to the endoplasmic reticulum membrane. The catalysed reaction is GTP + H2O = GDP + phosphate + H(+). Its function is as follows. Translation elongation factor that catalyzes the GTP-dependent binding of aminoacyl-tRNA (aa-tRNA) to the A-site of ribosomes during the elongation phase of protein synthesis. Base pairing between the mRNA codon and the aa-tRNA anticodon promotes GTP hydrolysis, releasing the aa-tRNA from EEF1A1 and allowing its accommodation into the ribosome. The growing protein chain is subsequently transferred from the P-site peptidyl tRNA to the A-site aa-tRNA, extending it by one amino acid through ribosome-catalyzed peptide bond formation. The polypeptide is Elongation factor 1-alpha 2 (Eef1a2) (Rattus norvegicus (Rat)).